The sequence spans 72 residues: Teretoxin Tan11.1 (72 aa).

The signal sequence occupies residues 1-21; the sequence is MLATKMSVTFCFLLMLTTVML. Residues 22–31 constitute a propeptide that is removed on maturation; sequence PTEAKTVAGR.

This sequence belongs to the teretoxin H (TH) superfamily. Post-translationally, contains 4 disulfide bonds. In terms of tissue distribution, expressed by the venom duct.

The protein resides in the secreted. This chain is Teretoxin Tan11.1, found in Terebra anilis (Auger snail).